A 181-amino-acid chain; its full sequence is ATP-dependent protease subunit HslV (181 aa).

T7 is a catalytic residue. Residues A162, C165, and T168 each contribute to the Na(+) site.

Belongs to the peptidase T1B family. HslV subfamily. In terms of assembly, a double ring-shaped homohexamer of HslV is capped on each side by a ring-shaped HslU homohexamer. The assembly of the HslU/HslV complex is dependent on binding of ATP.

It is found in the cytoplasm. The catalysed reaction is ATP-dependent cleavage of peptide bonds with broad specificity.. Allosterically activated by HslU binding. Protease subunit of a proteasome-like degradation complex believed to be a general protein degrading machinery. This Coxiella burnetii (strain Dugway 5J108-111) protein is ATP-dependent protease subunit HslV.